The sequence spans 428 residues: Putative G-protein coupled receptor F59B2.13 (428 aa).

Residues 1–30 (MSNNTTIPSKTATDICLTDRQMSLSVSSTE) lie on the Extracellular side of the membrane. Residues asparagine 3 and asparagine 4 are each glycosylated (N-linked (GlcNAc...) asparagine). A helical transmembrane segment spans residues 31 to 51 (GVLIGTIIPILVLFGISGNIL). The Cytoplasmic portion of the chain corresponds to 52 to 67 (NLTVLLAPNLRTRSNQ). A helical transmembrane segment spans residues 68–88 (LLACLAVADIVSLVVILPHSM). At 89-110 (AHYETFETALWFRKFYGKYKFQ) the chain is on the extracellular side. The helical transmembrane segment at 111-131 (IIAMTNWSIATATWLVFVICL) threads the bilayer. The Cytoplasmic segment spans residues 132-154 (ERLIIIKYPLSVRKQAKFFTPRN). The chain crosses the membrane as a helical span at residues 155–175 (VVTIIVVTTFILTSYNHVSHA). Over 176–222 (CAEKLFCNGTQYHVACLGIDSERWFRNEPNPNSEFMKSVVRVAPQVN) the chain is Extracellular. An N-linked (GlcNAc...) asparagine glycan is attached at asparagine 183. The helical transmembrane segment at 223–243 (AIFVVLIPVVLVIIFNVMLIL) threads the bilayer. At 244 to 278 (TLRQRTKLFEPSKTIRGDSQFTQLQSKTEHKVTIT) the chain is on the cytoplasmic side. Residues 279-299 (VTAIVTCFTITQSPSAFVTFL) traverse the membrane as a helical segment. Residues 300–309 (SSYVHRDWVT) lie on the Extracellular side of the membrane. The chain crosses the membrane as a helical span at residues 310–330 (LSAICTILVVLGKALNFVLFC). Over 331-428 (LSSASFRQRL…KEFRRGTSFV (98 aa)) the chain is Cytoplasmic.

The protein belongs to the G-protein coupled receptor 1 family.

The protein localises to the cell membrane. In Caenorhabditis elegans, this protein is Putative G-protein coupled receptor F59B2.13.